The following is an 85-amino-acid chain: Arminin 524 (85 aa).

A signal peptide spans 1-18 (MKAVFAILFLAFIALTYA). Positions 19–57 (KSYDEVKEEIKNEVEREIFEDLEEESDELDNDVEEFNDA) are excised as a propeptide. An Alanine amide modification is found at A82.

The protein belongs to the arminin family. Expressed in entodermal epithelium along the body column.

The protein resides in the secreted. The protein localises to the target cell membrane. Its function is as follows. Antimicrobial peptide with a broad-spectrum antimicrobial activity. Keeps its antibacterial activity under a wide range of salt concentrations that mimic physiological conditions of human blood, which is surprising, since Hydra is an obligate freshwater animal with nearly no salt tolerance. Does not affect red blood cells. This Hydra oligactis (Brown hydra) protein is Arminin 524.